The chain runs to 634 residues: Chaperone protein DnaK 2 (634 aa).

At T197 the chain carries Phosphothreonine; by autocatalysis. The span at A600 to S620 shows a compositional bias: low complexity. Residues A600–K634 form a disordered region. Positions G621 to K634 are enriched in acidic residues.

Belongs to the heat shock protein 70 family.

Its function is as follows. Acts as a chaperone. The polypeptide is Chaperone protein DnaK 2 (Synechococcus sp. (strain ATCC 27144 / PCC 6301 / SAUG 1402/1) (Anacystis nidulans)).